Here is a 109-residue protein sequence, read N- to C-terminus: Thioredoxin (109 aa).

The 108-residue stretch at 2-109 (ETLLWKDARE…LVEKIKELFK (108 aa)) folds into the Thioredoxin domain. The cysteines at positions 27 and 30 are disulfide-linked.

Belongs to the thioredoxin family.

Functionally, participates in various redox reactions through the reversible oxidation of its active center dithiol to a disulfide and catalyzes dithiol-disulfide exchange reactions. The chain is Thioredoxin (trxA) from Mycoplasmopsis pulmonis (strain UAB CTIP) (Mycoplasma pulmonis).